A 376-amino-acid polypeptide reads, in one-letter code: Succinyl-diaminopimelate desuccinylase (376 aa).

Zn(2+) is bound at residue His-66. Asp-68 is a catalytic residue. Residue Asp-99 coordinates Zn(2+). The active-site Proton acceptor is the Glu-133. Zn(2+) is bound by residues Glu-134, Glu-162, and His-348.

Belongs to the peptidase M20A family. DapE subfamily. In terms of assembly, homodimer. Requires Zn(2+) as cofactor. It depends on Co(2+) as a cofactor.

The catalysed reaction is N-succinyl-(2S,6S)-2,6-diaminopimelate + H2O = (2S,6S)-2,6-diaminopimelate + succinate. It participates in amino-acid biosynthesis; L-lysine biosynthesis via DAP pathway; LL-2,6-diaminopimelate from (S)-tetrahydrodipicolinate (succinylase route): step 3/3. Its function is as follows. Catalyzes the hydrolysis of N-succinyl-L,L-diaminopimelic acid (SDAP), forming succinate and LL-2,6-diaminopimelate (DAP), an intermediate involved in the bacterial biosynthesis of lysine and meso-diaminopimelic acid, an essential component of bacterial cell walls. This chain is Succinyl-diaminopimelate desuccinylase, found in Thioalkalivibrio sulfidiphilus (strain HL-EbGR7).